The primary structure comprises 425 residues: C2H2 type master regulator of conidiophore development brlA (425 aa).

Disordered stretches follow at residues 28–72, 232–257, and 281–301; these read MASS…RHTG, KTHSPTTPVRSCSLGTTSGTDTPMSR, and VQRQPSRKVARKQSSKQSLSL. A compositionally biased stretch (low complexity) spans 30–44; the sequence is SSFSPMESPTPTPTS. Residues 232–256 are compositionally biased toward polar residues; that stretch reads KTHSPTTPVRSCSLGTTSGTDTPMS. Over residues 285–294 the composition is skewed to basic residues; that stretch reads PSRKVARKQS. 2 consecutive C2H2-type zinc fingers follow at residues 321–345 and 351–376; these read KGRFKRQEHLKRHMKSHSKEKPHVC and ERAFSRSDNLNAHYTKTHSKRGGRNR. Positions 365–374 are enriched in basic residues; that stretch reads TKTHSKRGGR. The tract at residues 365–425 is disordered; it reads TKTHSKRGGR…RETSEEAWLE (61 aa).

It localises to the nucleus. In terms of biological role, brlA, abaA and wetA are pivotal regulators of conidiophore development and conidium maturation. They act individually and together to regulate their own expression and that of numerous other sporulation-specific genes. Binds promoters of target genes at brlA response elements (BREs) containing the conserved sequence 5'-(C/A)(A/G)AGGG(G/A)-3'. Also coordinates the expression of carbohydrate-active enzymes and of the key effectors of cell wall remodeling during autolysis. The chain is C2H2 type master regulator of conidiophore development brlA from Aspergillus niger (strain ATCC MYA-4892 / CBS 513.88 / FGSC A1513).